Consider the following 199-residue polypeptide: 3-isopropylmalate dehydratase small subunit (199 aa).

This sequence belongs to the LeuD family. LeuD type 1 subfamily. In terms of assembly, heterodimer of LeuC and LeuD.

The catalysed reaction is (2R,3S)-3-isopropylmalate = (2S)-2-isopropylmalate. It functions in the pathway amino-acid biosynthesis; L-leucine biosynthesis; L-leucine from 3-methyl-2-oxobutanoate: step 2/4. Its function is as follows. Catalyzes the isomerization between 2-isopropylmalate and 3-isopropylmalate, via the formation of 2-isopropylmaleate. This chain is 3-isopropylmalate dehydratase small subunit, found in Aeromonas hydrophila subsp. hydrophila (strain ATCC 7966 / DSM 30187 / BCRC 13018 / CCUG 14551 / JCM 1027 / KCTC 2358 / NCIMB 9240 / NCTC 8049).